The following is an 82-amino-acid chain: uncharacterized protein (82 aa).

The next 2 helical transmembrane spans lie at 29-49 and 55-75; these read LMNA…GIII and WSLP…LTFF.

It localises to the cell membrane. This is an uncharacterized protein from Escherichia coli (strain K12).